The following is a 356-amino-acid chain: RuBisCO accumulation factor 1 (356 aa).

The N-terminal alpha-helix stretch occupies residues 9–192; the sequence is LSEEERQELL…RALIEALLLD (184 aa). The segment at 216–342 is C-terminal beta-sheet; the sequence is PRLLPFAGTL…LVLILRPKRV (127 aa).

It belongs to the RAF family. Homodimer. Forms an RbcL(8)-Raf1(8) complex. Forms complexes of many stoichiometries with RbcL with and without RbcS. RbcX and Raf1 can bind simultaneously to RbcL.

It localises to the cytoplasm. Its function is as follows. A major RuBisCO chaperone. Acts after GroEL-GroES chaperonin to fold and/or assemble the large subunit of RuBisCO (ccbL, rbcL). Cooperates with RbcX in RbcL folding, plays the major role in assembly of dimers into RbcL(8)-Raf1(8) intermediate complexes. RbcS replaces Raf1, leading to holoenzyme formation. In terms of biological role, the Raf1 dimer brackets an RbcL dimer, leading to RbcL(8)-Raf1(8) complex formation. RbcS displaces Raf1, resulting in holoenzyme formation. Probably plays a role in early carboxysome assembly; in its absence CcaA, CcmM, CcmN, RbcL and RbcS colocalize in small patches while the shell proteins CcmK2, CcmK3 and CcmK4 are found diffused in the cytoplasm. It has been suggested that Raf1 and RbcX are partially functionally redundant. Other evidence suggests they are antagonistic in mediating RuBisCO assembly. This is RuBisCO accumulation factor 1 from Synechococcus elongatus (strain ATCC 33912 / PCC 7942 / FACHB-805) (Anacystis nidulans R2).